The primary structure comprises 592 residues: MEATAAPFSSIVSSRQNFSSSSSIRASSPASLFLSQKSIGNVNRKFKSPRSLSVRASSTSDSVVTLLDYGAGNVRSIRNALRHLGFSIKDVQTPGDILNADRLIFPGVGAFAPAMDVLNRTGMAEALCKYIENDRPFLGICLGLQLLFDSSEENGPVKGLGVIPGIVGRFDASAGIRVPHIGWNALQVGKDSEILDDVGNRHVYFVHSYRAIPSDENKDWISSTCNYGESFISSIRRGNVHAVQFHPEKSGEVGLSVLRRFLHPKLPATQKPMEGKASKLAKRVIACLDVRTNDKGDLVVTKGDQYDVREQSNENEVRNLGKPVDLAGQYYKDGADEISFLNITGFRDFPLGDLPMIQVLRQTSKNVFVPLTVGGGIRDFTDASGRYYSSLEVAAEYFRSGADKISIGSDAVSAAEEFIKSGVKTGKSSLEQISRVYGNQAVVVSIDPRRVYVNHPDDVPYKVIRVTNPGPNGEEYAWYQCTVSGGREGRPIGAFELAKAVEELGAGEILLNCIDCDGQGKGFDIDLVKLISDSVGIPVIASSGAGTPDHFSEVFEKTNASAALAAGIFHRKEVPIQSVKEHLQEERIEVRI.

Residues 1–55 (MEATAAPFSSIVSSRQNFSSSSSIRASSPASLFLSQKSIGNVNRKFKSPRSLSVR) constitute a chloroplast transit peptide. In terms of domain architecture, Glutamine amidotransferase type-1 spans 63–271 (VVTLLDYGAG…LHPKLPATQK (209 aa)). Active-site for GATase activity residues include Cys-141, His-246, and Glu-248. Positions 280-592 (LAKRVIACLD…LQEERIEVRI (313 aa)) are cyclase. Residues Asp-289 and Asp-447 contribute to the active site.

This sequence in the C-terminal section; belongs to the HisA/HisF family.

The protein resides in the plastid. The protein localises to the chloroplast. It catalyses the reaction 5-[(5-phospho-1-deoxy-D-ribulos-1-ylimino)methylamino]-1-(5-phospho-beta-D-ribosyl)imidazole-4-carboxamide + L-glutamine = D-erythro-1-(imidazol-4-yl)glycerol 3-phosphate + 5-amino-1-(5-phospho-beta-D-ribosyl)imidazole-4-carboxamide + L-glutamate + H(+). It carries out the reaction L-glutamine + H2O = L-glutamate + NH4(+). Its pathway is amino-acid biosynthesis; L-histidine biosynthesis; L-histidine from 5-phospho-alpha-D-ribose 1-diphosphate: step 5/9. Functionally, IGPS catalyzes the conversion of PRFAR and glutamine to IGP, AICAR and glutamate. The glutaminase domain produces the ammonia necessary for the cyclase domain to produce IGP and AICAR from PRFAR. The ammonia is channeled to the active site of the cyclase domain. This Arabidopsis thaliana (Mouse-ear cress) protein is Imidazole glycerol phosphate synthase hisHF, chloroplastic (HISN4).